The following is a 684-amino-acid chain: 1,4-alpha-glucan-branching enzyme (684 aa).

Positions 88 and 123 each coordinate (1,4-alpha-D-glucosyl)n. Aspartate 340 acts as the Nucleophile in catalysis. Glutamate 395 (proton donor) is an active-site residue.

It belongs to the glycosyl hydrolase 13 family. GlgB subfamily.

Its subcellular location is the cytoplasm. It catalyses the reaction Transfers a segment of a (1-&gt;4)-alpha-D-glucan chain to a primary hydroxy group in a similar glucan chain.. The protein operates within glycan biosynthesis; glycogen biosynthesis. Its function is as follows. Glycogen-branching enzyme participates in the glycogen biosynthetic process along with glycogenin and glycogen synthase. Generates alpha-1,6-glucosidic branches from alpha-1,4-linked glucose chains, to increase solubility of the glycogen polymer. In Emericella nidulans (strain FGSC A4 / ATCC 38163 / CBS 112.46 / NRRL 194 / M139) (Aspergillus nidulans), this protein is 1,4-alpha-glucan-branching enzyme (be1).